A 232-amino-acid chain; its full sequence is (S)-2-haloacid dehalogenase (232 aa).

Catalysis depends on aspartate 10, which acts as the Nucleophile. An (S)-2-haloacid contacts are provided by residues 11 to 12 (LY), arginine 41, and 118 to 119 (SN). Residues 175-180 (SSNAWD) form an important for catalytic activity region.

This sequence belongs to the HAD-like hydrolase superfamily. S-2-haloalkanoic acid dehalogenase family. As to quaternary structure, homodimer.

The catalysed reaction is an (S)-2-haloacid + H2O = a (2R)-2-hydroxycarboxylate + a halide anion + H(+). The enzyme catalyses (S)-2-chloropropanoate + H2O = (R)-lactate + chloride + H(+). In terms of biological role, catalyzes the hydrolytic dehalogenation of small (S)-2-haloalkanoic acids to yield the corresponding (R)-2-hydroxyalkanoic acids. Acts on acids of short chain lengths, C(2) to C(4), with inversion of configuration at C-2. Active with 2-halogenated carboxylic acids and converts only the S-isomer (or L-isomer) of 2-chloropropionic acid with inversion of configuration to produce R-lactate (or D-isomer). The polypeptide is (S)-2-haloacid dehalogenase (Pseudomonas sp. (strain YL)).